The chain runs to 206 residues: Shieldin complex subunit 1 (206 aa).

Polar residues-rich tracts occupy residues 1–15 (MATQ…TEES), 33–43 (RPSQQTNSEAF), and 60–69 (DSSNLNTEQN). Disordered stretches follow at residues 1 to 21 (MATQ…LDLP) and 33 to 69 (RPSQ…TEQN).

Component of the shieldin complex, consisting of SHLD1, SHLD2, SHLD3 and MAD2L2/REV7. Within the complex, SHLD2 forms a scaffold which interacts with a SHLD3-MAD2L2 subcomplex via its N-terminus, and with SHLD1 via its C-terminus. Interacts with ASTE1.

It is found in the chromosome. Component of the shieldin complex, which plays an important role in repair of DNA double-stranded breaks (DSBs). During G1 and S phase of the cell cycle, the complex functions downstream of TP53BP1 to promote non-homologous end joining (NHEJ) and suppress DNA end resection. Mediates various NHEJ-dependent processes including immunoglobulin class-switch recombination, and fusion of unprotected telomeres. This chain is Shieldin complex subunit 1, found in Bos taurus (Bovine).